Reading from the N-terminus, the 946-residue chain is Serine/arginine repetitive matrix protein 1 (946 aa).

Methionine 1 bears the N-acetylmethionine mark. Positions 1–151 are necessary for DNA and RNA-binding; the sequence is MDAGFFRGTS…ASLKKQDEDK (151 aa). Positions 1-156 are necessary for mRNA 3'-end cleavage and cytoplasmic accumulation; the sequence is MDAGFFRGTS…QDEDKDKRDK (156 aa). Arginine 7 carries the citrulline modification. Residues 27 to 126 form the PWI domain; the sequence is QLKFAECLEK…AGIPSAFLEL (100 aa). Lysine 127 participates in a covalent cross-link: Glycyl lysine isopeptide (Lys-Gly) (interchain with G-Cter in SUMO2). Lysine 140 carries the post-translational modification N6-acetyllysine. Over residues 142–170 the composition is skewed to basic and acidic residues; sequence ASLKKQDEDKDKRDKEEKESSREKRERSR. A disordered region spans residues 142–946; that stretch reads ASLKKQDEDK…MRKAQVSPQS (805 aa). Over residues 171–207 the composition is skewed to basic residues; the sequence is SPRRRKSRSPSPRRRSSPVRRERKRSHSRSPRHRTKS. Positions 214–234 are enriched in basic and acidic residues; it reads PEKKEKSPELPEPSVRMKDSS. Phosphoserine occurs at positions 220 and 227. Residue lysine 231 forms a Glycyl lysine isopeptide (Lys-Gly) (interchain with G-Cter in SUMO1); alternate linkage. Lysine 231 is covalently cross-linked (Glycyl lysine isopeptide (Lys-Gly) (interchain with G-Cter in SUMO2); alternate). Residues serine 234 and serine 240 each carry the phosphoserine modification. Threonine 241 carries the phosphothreonine modification. The span at 246–273 shows a compositional bias: basic and acidic residues; the sequence is KAPKPEPVPEPKEPSPEKNSKKEKEKTR. Residue lysine 249 forms a Glycyl lysine isopeptide (Lys-Gly) (interchain with G-Cter in SUMO2) linkage. Serine 260 is subject to Phosphoserine. 2 stretches are compositionally biased toward basic residues: residues 274 to 327 and 334 to 349; these read PRSR…RTPP and PRHR…RRRS. The segment at 298-707 is necessary for speckles and matrix localization; that stretch reads RRHRSRSRSY…NKRHSPSPRP (410 aa). Over residues 350 to 366 the composition is skewed to low complexity; it reads SASLSGSSSSSSSSRSR. Phosphoserine occurs at positions 387, 389, 391, and 400. Threonine 404 is subject to Phosphothreonine. Position 412 is a phosphoserine (serine 412). Threonine 414 bears the Phosphothreonine mark. A phosphoserine mark is found at serine 418, serine 427, serine 429, and serine 434. Residues 426–436 are compositionally biased toward polar residues; the sequence is VSVSPGRTSGK. Lysine 445 is covalently cross-linked (Glycyl lysine isopeptide (Lys-Gly) (interchain with G-Cter in SUMO2)). Residues serine 448 and serine 450 each carry the phosphoserine modification. Lysine 457 participates in a covalent cross-link: Glycyl lysine isopeptide (Lys-Gly) (interchain with G-Cter in SUMO2). A phosphoserine mark is found at serine 461 and serine 463. Lysine 470 participates in a covalent cross-link: Glycyl lysine isopeptide (Lys-Gly) (interchain with G-Cter in SUMO2). Serine 476 carries the phosphoserine modification. The span at 476–499 shows a compositional bias: low complexity; it reads SVQQRRQYRRQNQQSSSDSGSSST. The segment covering 501–516 has biased composition (basic and acidic residues); it reads EDERPKRSHVKNGEVG. A phosphoserine mark is found at serine 522, serine 524, serine 526, serine 528, serine 530, serine 561, serine 563, serine 572, and serine 574. Basic residues predominate over residues 555–572; it reads SSRRRRSPSPPPARRRRS. Residues 574–585 show a composition bias toward pro residues; sequence SPAPPPPPPPPP. Residues 586–611 show a composition bias toward basic residues; it reads PRRRRSPTPPPRRRTPSPPPRRRSPS. Threonine 593 and threonine 600 each carry phosphothreonine. Serine 602 is subject to Phosphoserine. Positions 612–624 are enriched in low complexity; it reads PRRYSPPIQRRYS. Tyrosine 615 bears the Phosphotyrosine mark. 3 positions are modified to phosphoserine: serine 616, serine 624, and serine 626. The residue at position 633 (threonine 633) is a Phosphothreonine. A phosphoserine mark is found at serine 635, serine 645, serine 647, serine 655, and serine 657. Basic residues predominate over residues 640–655; sequence PKRRASPSPPPKRRVS. Residues 668–682 are compositionally biased toward basic residues; it reads TKRRSPSLSSKHRKG. Over residues 704–718 the composition is skewed to pro residues; it reads SPRPRAPQTSSPPPV. Serine 713, serine 714, serine 723, serine 725, serine 731, and serine 733 each carry phosphoserine. Polar residues predominate over residues 724–736; sequence ASPQGRQSPSPST. A Phosphothreonine modification is found at threonine 736. Serine 779, serine 781, serine 789, serine 793, serine 795, serine 797, serine 810, serine 814, serine 816, and serine 818 each carry phosphoserine. Residues 779-800 show a composition bias toward low complexity; that stretch reads SPSPQSVRRVSSSRSVSGSPEP. Position 819 is a phosphothreonine (threonine 819). Phosphoserine occurs at positions 822 and 832. Residues 833–842 are compositionally biased toward polar residues; sequence PTPSLSPARN. A Phosphothreonine modification is found at threonine 834. Phosphoserine occurs at positions 836, 838, and 843. The segment covering 850 to 875 has biased composition (basic residues); sequence KKKKKKKDKKHKKDKKHKKHKKHKKE. A compositionally biased stretch (low complexity) spans 878-907; the sequence is VTIATPATAAPAAVSAATTTSAQEEPAAAP. Position 913 is a phosphothreonine (threonine 913). Serine 915 is modified (phosphoserine). Over residues 924-934 the composition is skewed to basic and acidic residues; the sequence is DLERHLREKAL. A Phosphoserine modification is found at serine 943.

The protein belongs to the splicing factor SR family. As to quaternary structure, identified in the spliceosome C complex. Found in a pre-mRNA splicing complex with SFRS4, SFRS5, SNRP70, SNRPA1, SRRM1 and SRRM2. Component of the minor spliceosome, which splices U12-type introns. Found in a pre-mRNA exonic splicing enhancer (ESE) complex with SNRP70, SNRPA1, SRRM1 and TRA2B/SFRS10. Found in a mRNA splicing-dependent exon junction complex (EJC) with DEK, PRPF8, NCBP1, RBM8A, RNPS1, SRRM1 and ALYREF/THOC4. Interacts with DDX39B, CPSF1, RBM8A, RNPS1, and ALYREF/THOC4. Seems to be a compound of RNA export complexes that are released from speckles in a ATP-dependent manner. Citrullinated by PADI4. In terms of processing, phosphorylated on multiple serine and threonine residues by DYRK3 during the G2-to-M transition, after the nuclear-envelope breakdown. Phosphorylation by DYRK3 promotes disassembly of nuclear speckles.

Its subcellular location is the nucleus matrix. It is found in the nucleus speckle. Functionally, part of pre- and post-splicing multiprotein mRNP complexes. As a component of the minor spliceosome, involved in the splicing of U12-type introns in pre-mRNAs. Involved in numerous pre-mRNA processing events. Promotes constitutive and exonic splicing enhancer (ESE)-dependent splicing activation by bridging together sequence-specific (SR family proteins, SFRS4, SFRS5 and TRA2B/SFRS10) and basal snRNP (SNRP70 and SNRPA1) factors of the spliceosome. Stimulates mRNA 3'-end cleavage independently of the formation of an exon junction complex. Binds both pre-mRNA and spliced mRNA 20-25 nt upstream of exon-exon junctions. Binds RNA and DNA with low sequence specificity and has similar preference for either double- or single-stranded nucleic acid substrates. The sequence is that of Serine/arginine repetitive matrix protein 1 (Srrm1) from Mus musculus (Mouse).